Here is a 220-residue protein sequence, read N- to C-terminus: Fructose-6-phosphate aldolase (220 aa).

Residue Lys85 is the Schiff-base intermediate with substrate of the active site.

This sequence belongs to the transaldolase family. Type 3A subfamily. Homodecamer.

It is found in the cytoplasm. The enzyme catalyses beta-D-fructose 6-phosphate = dihydroxyacetone + D-glyceraldehyde 3-phosphate. Its function is as follows. Catalyzes the reversible formation of fructose 6-phosphate from dihydroxyacetone and D-glyceraldehyde 3-phosphate via an aldolization reaction. This is Fructose-6-phosphate aldolase from Enterobacter sp. (strain 638).